Consider the following 599-residue polypeptide: Pentatricopeptide repeat-containing protein At3g62470, mitochondrial (599 aa).

A mitochondrion-targeting transit peptide spans 1-99; it reads MAAAPWLHLS…RGFSSGSSNV (99 aa). 10 PPR repeats span residues 194 to 228, 230 to 262, 263 to 293, 297 to 331, 332 to 366, 367 to 401, 402 to 436, 437 to 471, 472 to 506, and 507 to 541; these read DSRTYNSMMSILAKTRQFETMVSVLEEMGTKGLLT, ETFTIAMKAFAAAKERKKAVGIFELMKKYKFKI, GVETINCLLDSLGRAKLGKEAQVLFDKLKER, NMMTYTVLLNGWCRVRNLIEAARIWNDMIDQGLKP, DIVAHNVMLEGLLRSRKKSDAIKLFHVMKSKGPCP, NVRSYTIMIRDFCKQSSMETAIEYFDDMVDSGLQP, DAAVYTCLITGFGTQKKLDTVYELLKEMQEKGHPP, DGKTYNALIKLMANQKMPEHATRIYNKMIQNEIEP, SIHTFNMIMKSYFMARNYEMGRAVWEEMIKKGICP, and DDNSYTVLIRGLIGEGKSREACRYLEEMLDKGMKT.

Belongs to the PPR family. P subfamily.

It is found in the mitochondrion. The chain is Pentatricopeptide repeat-containing protein At3g62470, mitochondrial from Arabidopsis thaliana (Mouse-ear cress).